We begin with the raw amino-acid sequence, 515 residues long: Endoglucanase 2 (515 aa).

An N-terminal signal peptide occupies residues 1–31; the sequence is MVAKPRSRCCCCSVFIGVIILIAIIIAVIFT. N-linked (GlcNAc...) asparagine glycosylation occurs at Asn37. The active-site Nucleophile is the Asp100. N-linked (GlcNAc...) asparagine glycosylation occurs at Asn250. His433 is a catalytic residue. Asn475 is a glycosylation site (N-linked (GlcNAc...) asparagine). Asp480 is a catalytic residue. Asn483 is a glycosylation site (N-linked (GlcNAc...) asparagine). Glu489 is a catalytic residue.

This sequence belongs to the glycosyl hydrolase 9 (cellulase E) family.

The protein localises to the secreted. It catalyses the reaction Endohydrolysis of (1-&gt;4)-beta-D-glucosidic linkages in cellulose, lichenin and cereal beta-D-glucans.. The polypeptide is Endoglucanase 2 (Arabidopsis thaliana (Mouse-ear cress)).